The chain runs to 301 residues: MEKDCQDIQQLDSEENDHQLSGDDEHGSHVQDPRIENPHWKGQPLSRPFPQRLCSTFRLSLLALAFNILLLVVICVVSSQSIQLQEEFRTLKETFSNFSSSTLMEFGALDTLGGSTNAILTSWLAQLEEKQQQLKADHSTLLFHLKHFPMDLRTLTCQLAYFQSNGTECCPVNWVEFGGSCYWFSRDGLTWAEADQYCQLENAHLLVINSREEQDFVVKHRSQFHIWIGLTDRDGSWKWVDGTDYRSNYRNWAFTQPDNWQGHEQGGGEDCAEILSDGHWNDNFCQQVNRWVCEKRRNITH.

The interval 1-43 (MEKDCQDIQQLDSEENDHQLSGDDEHGSHVQDPRIENPHWKGQ) is disordered. Over 1–58 (MEKDCQDIQQLDSEENDHQLSGDDEHGSHVQDPRIENPHWKGQPLSRPFPQRLCSTFR) the chain is Cytoplasmic. At Ser-13 the chain carries Phosphoserine. Positions 16–39 (NDHQLSGDDEHGSHVQDPRIENPH) are enriched in basic and acidic residues. Residue Cys-54 is the site of S-palmitoyl cysteine attachment. A helical; Signal-anchor for type II membrane protein transmembrane segment spans residues 59–79 (LSLLALAFNILLLVVICVVSS). The Extracellular portion of the chain corresponds to 80–301 (QSIQLQEEFR…VCEKRRNITH (222 aa)). N-linked (GlcNAc...) asparagine glycosylation is found at Asn-97 and Asn-165. The C-type lectin domain maps to 169-295 (CCPVNWVEFG…QQVNRWVCEK (127 aa)). 3 disulfides stabilise this stretch: Cys-170–Cys-181, Cys-198–Cys-293, and Cys-271–Cys-285. Asn-298 is a glycosylation site (N-linked (GlcNAc...) asparagine).

In terms of assembly, interacts with LASS2. As to expression, expressed exclusively in hepatic parenchymal cells.

The protein localises to the membrane. Functionally, mediates the endocytosis of plasma glycoproteins to which the terminal sialic acid residue on their complex carbohydrate moieties has been removed. The receptor recognizes terminal galactose and N-acetylgalactosamine units. After ligand binding to the receptor, the resulting complex is internalized and transported to a sorting organelle, where receptor and ligand are disassociated. The receptor then returns to the cell membrane surface. The protein is Asialoglycoprotein receptor 2 (Asgr2) of Mus musculus (Mouse).